The chain runs to 867 residues: Alanine--tRNA ligase (867 aa).

4 residues coordinate Zn(2+): H558, H562, C660, and H664.

This sequence belongs to the class-II aminoacyl-tRNA synthetase family. Requires Zn(2+) as cofactor.

Its subcellular location is the cytoplasm. The catalysed reaction is tRNA(Ala) + L-alanine + ATP = L-alanyl-tRNA(Ala) + AMP + diphosphate. Functionally, catalyzes the attachment of alanine to tRNA(Ala) in a two-step reaction: alanine is first activated by ATP to form Ala-AMP and then transferred to the acceptor end of tRNA(Ala). Also edits incorrectly charged Ser-tRNA(Ala) and Gly-tRNA(Ala) via its editing domain. This chain is Alanine--tRNA ligase, found in Fervidobacterium nodosum (strain ATCC 35602 / DSM 5306 / Rt17-B1).